The sequence spans 76 residues: Putative snRNP Sm-like protein (76 aa).

A Sm domain is found at 4–76 (RPLDVIHKSL…VLALSPVELE (73 aa)).

The protein belongs to the snRNP Sm proteins family.

The chain is Putative snRNP Sm-like protein from Thermococcus kodakarensis (strain ATCC BAA-918 / JCM 12380 / KOD1) (Pyrococcus kodakaraensis (strain KOD1)).